A 1070-amino-acid polypeptide reads, in one-letter code: [F-actin]-monooxygenase MICAL1 (1070 aa).

A monooxygenase domain region spans residues 1-489 (MASTISTNPA…RDLYDMEAKE (489 aa)). FAD is bound by residues cysteine 95, 114-116 (EKR), 121-123 (RHN), phenylalanine 181, tyrosine 293, and aspartate 393. Threonine 475 carries the phosphothreonine modification. The Calponin-homology (CH) domain maps to 508-612 (VGSQEELLRW…YLSHFHSAFK (105 aa)). A disordered region spans residues 643–690 (QRTRTQENGEDAGGKKPRLEVKAETPSTEEPPVPKPDEPMTPPSQQQD). The segment covering 646-665 (RTQENGEDAGGKKPRLEVKA) has biased composition (basic and acidic residues). Positions 671-684 (EEPPVPKPDEPMTP) are enriched in pro residues. In terms of domain architecture, LIM zinc-binding spans 695–757 (DLCALCGQHL…LQHLPQTGHE (63 aa)). 8 residues coordinate Zn(2+): cysteine 697, cysteine 700, histidine 718, cysteine 721, cysteine 724, cysteine 727, cysteine 747, and histidine 750. Disordered regions lie at residues 754–838 (TGHE…RSCS) and 865–887 (MEMG…EDVP). Residues 755-766 (GHEEDSSDRGPE) show a composition bias toward basic and acidic residues. A compositionally biased stretch (polar residues) spans 770 to 781 (LPMSSENNTPSG). Phosphoserine occurs at positions 793, 875, and 876. A compositionally biased stretch (acidic residues) spans 876–887 (SEEETEEEEDVP). An important for interaction with RAB8A region spans residues 904 to 1070 (GTMNNYPTWR…ELASEPGVQG (167 aa)). In terms of domain architecture, bMERB spans 921–1070 (KEEEMKRFCK…ELASEPGVQG (150 aa)). Residues 928–1030 (FCKAQAIQRR…EETLKTAADR (103 aa)) adopt a coiled-coil conformation. Serine 1060 is subject to Phosphoserine.

Belongs to the Mical family. Interacts with STK38 and STK38L. Associates with the SH3 domain of NEDD9. Interacts with VIM and PLXNA3. Interacts with RAB1B, RAB8A, RAB10, RAB13 and RAB15 (in their GTP-bound forms); binding to RAB1B is of low affinity compared to other Rab proteins; at least in case of RAB8A and RAB10 can bind 2 molecules of the Rab proteins simultaneously. Interacts with GRAF1/ARHGAP26, GRAF2/ARHGAP10, RAB8A, RAB8B and RAB10; may bind simultaneously to GRAFs and Rabs and connects GRAFs to Rabs. Does not interact with RAB1 and RAB11A. The cofactor is FAD.

Its subcellular location is the cytoplasm. It localises to the cytoskeleton. The protein resides in the endosome membrane. The protein localises to the midbody. The enzyme catalyses L-methionyl-[F-actin] + NADPH + O2 + H(+) = L-methionyl-(R)-S-oxide-[F-actin] + NADP(+) + H2O. It carries out the reaction NADPH + O2 + H(+) = H2O2 + NADP(+). Functionally, monooxygenase that promotes depolymerization of F-actin by mediating oxidation of specific methionine residues on actin to form methionine-sulfoxide, resulting in actin filament disassembly and preventing repolymerization. In the absence of actin, it also functions as a NADPH oxidase producing H(2)O(2). Acts as a cytoskeletal regulator that connects NEDD9 to intermediate filaments. Also acts as a negative regulator of apoptosis via its interaction with STK38 and STK38L; acts by antagonizing STK38 and STK38L activation by MST1/STK4. Involved in regulation of lamina-specific connectivity in the nervous system such as the development of lamina-restricted hippocampal connections. Through redox regulation of the actin cytoskeleton controls the intracellular distribution of secretory vesicles containing L1/neurofascin/NgCAM family proteins in neurons, thereby regulating their cell surface levels. May act as Rab effector protein and play a role in vesicle trafficking. Promotes endosomal tubule extension by associating with RAB8 (RAB8A or RAB8B), RAB10 and GRAF (GRAF1/ARHGAP26 or GRAF2/ARHGAP10) on the endosomal membrane which may connect GRAFs to Rabs, thereby participating in neosynthesized Rab8-Rab10-Rab11-dependent protein export. The polypeptide is [F-actin]-monooxygenase MICAL1 (MICAL1) (Bos taurus (Bovine)).